Consider the following 493-residue polypeptide: Keratin, type II cuticular Hb3 (493 aa).

Residues 1–111 (MTCGFSTVGS…PNAQCVKQEE (111 aa)) are head. The IF rod domain maps to 111–422 (EKEQIKCLNN…RLLEGEEQRL (312 aa)). A coil 1A region spans residues 112–146 (KEQIKCLNNRFAAFIDKVRFLEQQNKLLETKLQFY). The segment at 147–156 (QNRQCCESNL) is linker 1. The segment at 157–257 (EPLFEGYIET…YEEEIRVLQA (101 aa)) is coil 1B. Lys217 is covalently cross-linked (Glycyl lysine isopeptide (Lys-Gly) (interchain with G-Cter in SUMO1)). The interval 258–274 (NISDTSVIVKMDNSRGL) is linker 12. Positions 275–418 (NMDNIVAEIK…ATYRRLLEGE (144 aa)) are coil 2. The segment at 419-493 (EQRLCEGVGA…GGGSCSLGRC (75 aa)) is tail.

Belongs to the intermediate filament family. In terms of assembly, heterotetramer of two type I and two type II keratins.

The chain is Keratin, type II cuticular Hb3 from Bos taurus (Bovine).